The following is a 141-amino-acid chain: Hemoglobin subunit alpha-1 (141 aa).

One can recognise a Globin domain in the interval 1–141; it reads VLTDEDKARV…LSKDLVSKYR (141 aa). H58 serves as a coordination point for O2. H87 contributes to the heme b binding site.

It belongs to the globin family. As to quaternary structure, heterotetramer of two alpha chains and two beta chains. In terms of tissue distribution, red blood cells.

Its function is as follows. Involved in oxygen transport from the lung to the various peripheral tissues. The polypeptide is Hemoglobin subunit alpha-1 (Naja naja (Indian cobra)).